A 108-amino-acid chain; its full sequence is MKVKIVTPYGIVYDRESDFISFRTVEGSMGILPRRAPIVTQLSVCDVKIKSGDDEYHLKVAGGFLLCDGKDVIIITEEAGREEDISPDRFMEARERVERVRRFFQSSL.

Belongs to the ATPase epsilon chain family. F-type ATPases have 2 components, CF(1) - the catalytic core - and CF(0) - the membrane proton channel. CF(1) has five subunits: alpha(3), beta(3), gamma(1), delta(1), epsilon(1). CF(0) has three main subunits: a, b and c.

It localises to the cell inner membrane. Its function is as follows. Produces ATP from ADP in the presence of a proton gradient across the membrane. The polypeptide is ATP synthase epsilon chain (Thermotoga maritima (strain ATCC 43589 / DSM 3109 / JCM 10099 / NBRC 100826 / MSB8)).